The following is an 80-amino-acid chain: UPF0291 protein LACR_1198 (80 aa).

It belongs to the UPF0291 family.

It localises to the cytoplasm. The sequence is that of UPF0291 protein LACR_1198 from Lactococcus lactis subsp. cremoris (strain SK11).